Here is a 179-residue protein sequence, read N- to C-terminus: Large ribosomal subunit protein uL6 (179 aa).

Belongs to the universal ribosomal protein uL6 family. Part of the 50S ribosomal subunit.

Its function is as follows. This protein binds to the 23S rRNA, and is important in its secondary structure. It is located near the subunit interface in the base of the L7/L12 stalk, and near the tRNA binding site of the peptidyltransferase center. The chain is Large ribosomal subunit protein uL6 from Herpetosiphon aurantiacus (strain ATCC 23779 / DSM 785 / 114-95).